A 252-amino-acid polypeptide reads, in one-letter code: Ribonuclease HII (252 aa).

The 185-residue stretch at 68-252 folds into the RNase H type-2 domain; that stretch reads EYVAGLDEVG…FGPVRDRLRS (185 aa). Residues D74, E75, and D165 each coordinate a divalent metal cation.

It belongs to the RNase HII family. Requires Mn(2+) as cofactor. It depends on Mg(2+) as a cofactor.

It is found in the cytoplasm. The enzyme catalyses Endonucleolytic cleavage to 5'-phosphomonoester.. Its function is as follows. Endonuclease that specifically degrades the RNA of RNA-DNA hybrids. The polypeptide is Ribonuclease HII (Lacticaseibacillus paracasei (strain ATCC 334 / BCRC 17002 / CCUG 31169 / CIP 107868 / KCTC 3260 / NRRL B-441) (Lactobacillus paracasei)).